Here is a 246-residue protein sequence, read N- to C-terminus: 1-(5-phosphoribosyl)-5-[(5-phosphoribosylamino)methylideneamino] imidazole-4-carboxamide isomerase (246 aa).

Catalysis depends on aspartate 7, which acts as the Proton acceptor. Aspartate 130 (proton donor) is an active-site residue.

Belongs to the HisA/HisF family.

Its subcellular location is the cytoplasm. It carries out the reaction 1-(5-phospho-beta-D-ribosyl)-5-[(5-phospho-beta-D-ribosylamino)methylideneamino]imidazole-4-carboxamide = 5-[(5-phospho-1-deoxy-D-ribulos-1-ylimino)methylamino]-1-(5-phospho-beta-D-ribosyl)imidazole-4-carboxamide. Its pathway is amino-acid biosynthesis; L-histidine biosynthesis; L-histidine from 5-phospho-alpha-D-ribose 1-diphosphate: step 4/9. The polypeptide is 1-(5-phosphoribosyl)-5-[(5-phosphoribosylamino)methylideneamino] imidazole-4-carboxamide isomerase (Sodalis glossinidius (strain morsitans)).